The primary structure comprises 154 residues: Myoglobin (154 aa).

Residues 2–148 (GLSEGEWQLV…FRKDIATKYK (147 aa)) enclose the Globin domain. Position 4 is a phosphoserine (Ser4). His65 contributes to the nitrite binding site. Position 65 (His65) interacts with O2. Phosphothreonine is present on Thr68. Residue His94 coordinates heme b.

Belongs to the globin family. In terms of assembly, monomeric.

The protein localises to the cytoplasm. Its subcellular location is the sarcoplasm. It catalyses the reaction Fe(III)-heme b-[protein] + nitric oxide + H2O = Fe(II)-heme b-[protein] + nitrite + 2 H(+). It carries out the reaction H2O2 + AH2 = A + 2 H2O. Its function is as follows. Monomeric heme protein which primary function is to store oxygen and facilitate its diffusion within muscle tissues. Reversibly binds oxygen through a pentacoordinated heme iron and enables its timely and efficient release as needed during periods of heightened demand. Depending on the oxidative conditions of tissues and cells, and in addition to its ability to bind oxygen, it also has a nitrite reductase activity whereby it regulates the production of bioactive nitric oxide. Under stress conditions, like hypoxia and anoxia, it also protects cells against reactive oxygen species thanks to its pseudoperoxidase activity. This is Myoglobin (MB) from Phocoenoides dalli dalli (Dall's porpoise).